We begin with the raw amino-acid sequence, 112 residues long: Pediocin PA-1 immunity protein (112 aa).

Functionally, imparts immunity to pediocin PA-1/ACH to naturally sensitive host strains. This is Pediocin PA-1 immunity protein (pedB) from Pediococcus acidilactici.